The following is a 443-amino-acid chain: Protein AknT (443 aa).

It belongs to the cytochrome P450 family.

Functionally, involved in the biosynthesis of the anthracycline antitumor agent aclacinomycin A. AknT is required for the glycosylation of aklavinone aglycone by AknS to yield aclacinomycin T (rhodosaminyl-aklavinone). This chain is Protein AknT, found in Streptomyces galilaeus.